Here is a 272-residue protein sequence, read N- to C-terminus: 4-hydroxy-tetrahydrodipicolinate reductase (272 aa).

G10–M15 serves as a coordination point for NAD(+). NADP(+) is bound at residue R37. NAD(+)-binding positions include G100–T102 and S124–M127. The active-site Proton donor/acceptor is the H157. H158 is a (S)-2,3,4,5-tetrahydrodipicolinate binding site. The Proton donor role is filled by K161. G167–T168 serves as a coordination point for (S)-2,3,4,5-tetrahydrodipicolinate.

Belongs to the DapB family.

Its subcellular location is the cytoplasm. It carries out the reaction (S)-2,3,4,5-tetrahydrodipicolinate + NAD(+) + H2O = (2S,4S)-4-hydroxy-2,3,4,5-tetrahydrodipicolinate + NADH + H(+). The catalysed reaction is (S)-2,3,4,5-tetrahydrodipicolinate + NADP(+) + H2O = (2S,4S)-4-hydroxy-2,3,4,5-tetrahydrodipicolinate + NADPH + H(+). The protein operates within amino-acid biosynthesis; L-lysine biosynthesis via DAP pathway; (S)-tetrahydrodipicolinate from L-aspartate: step 4/4. Functionally, catalyzes the conversion of 4-hydroxy-tetrahydrodipicolinate (HTPA) to tetrahydrodipicolinate. In Methylocella silvestris (strain DSM 15510 / CIP 108128 / LMG 27833 / NCIMB 13906 / BL2), this protein is 4-hydroxy-tetrahydrodipicolinate reductase.